Here is a 258-residue protein sequence, read N- to C-terminus: Imidazole glycerol phosphate synthase subunit HisF (258 aa).

Catalysis depends on residues Asp11 and Asp130.

The protein belongs to the HisA/HisF family. Heterodimer of HisH and HisF.

Its subcellular location is the cytoplasm. The catalysed reaction is 5-[(5-phospho-1-deoxy-D-ribulos-1-ylimino)methylamino]-1-(5-phospho-beta-D-ribosyl)imidazole-4-carboxamide + L-glutamine = D-erythro-1-(imidazol-4-yl)glycerol 3-phosphate + 5-amino-1-(5-phospho-beta-D-ribosyl)imidazole-4-carboxamide + L-glutamate + H(+). It functions in the pathway amino-acid biosynthesis; L-histidine biosynthesis; L-histidine from 5-phospho-alpha-D-ribose 1-diphosphate: step 5/9. Functionally, IGPS catalyzes the conversion of PRFAR and glutamine to IGP, AICAR and glutamate. The HisF subunit catalyzes the cyclization activity that produces IGP and AICAR from PRFAR using the ammonia provided by the HisH subunit. This Nitrobacter hamburgensis (strain DSM 10229 / NCIMB 13809 / X14) protein is Imidazole glycerol phosphate synthase subunit HisF.